A 241-amino-acid chain; its full sequence is Probable transcriptional regulatory protein Rpic_2388 (241 aa).

This sequence belongs to the TACO1 family.

It is found in the cytoplasm. In Ralstonia pickettii (strain 12J), this protein is Probable transcriptional regulatory protein Rpic_2388.